We begin with the raw amino-acid sequence, 84 residues long: Small ribosomal subunit protein uS17 (84 aa).

The protein belongs to the universal ribosomal protein uS17 family. Part of the 30S ribosomal subunit.

Its function is as follows. One of the primary rRNA binding proteins, it binds specifically to the 5'-end of 16S ribosomal RNA. The polypeptide is Small ribosomal subunit protein uS17 (Moorella thermoacetica (strain ATCC 39073 / JCM 9320)).